Here is a 209-residue protein sequence, read N- to C-terminus: Imidazole glycerol phosphate synthase subunit HisH (209 aa).

In terms of domain architecture, Glutamine amidotransferase type-1 spans 1-205; that stretch reads MIAIIDYGMG…KGVVETWKSS (205 aa). The active-site Nucleophile is Cys-79. Catalysis depends on residues His-180 and Glu-182.

Heterodimer of HisH and HisF.

It localises to the cytoplasm. It carries out the reaction 5-[(5-phospho-1-deoxy-D-ribulos-1-ylimino)methylamino]-1-(5-phospho-beta-D-ribosyl)imidazole-4-carboxamide + L-glutamine = D-erythro-1-(imidazol-4-yl)glycerol 3-phosphate + 5-amino-1-(5-phospho-beta-D-ribosyl)imidazole-4-carboxamide + L-glutamate + H(+). The enzyme catalyses L-glutamine + H2O = L-glutamate + NH4(+). It participates in amino-acid biosynthesis; L-histidine biosynthesis; L-histidine from 5-phospho-alpha-D-ribose 1-diphosphate: step 5/9. In terms of biological role, IGPS catalyzes the conversion of PRFAR and glutamine to IGP, AICAR and glutamate. The HisH subunit catalyzes the hydrolysis of glutamine to glutamate and ammonia as part of the synthesis of IGP and AICAR. The resulting ammonia molecule is channeled to the active site of HisF. This chain is Imidazole glycerol phosphate synthase subunit HisH, found in Bacillus anthracis (strain CDC 684 / NRRL 3495).